The sequence spans 145 residues: I-leader protein (145 aa).

The protein localises to the host cytoplasm. It is found in the host perinuclear region. This is I-leader protein from Human adenovirus C serotype 2 (HAdV-2).